We begin with the raw amino-acid sequence, 90 residues long: MKTAIFTVVLALAVFAVLSFGWEANEKALSEEFTELIHEKEAASETEARECRYFWGECHDHMPCCDWLVCRYKWPITYNICVWNRTFPEK.

An N-terminal signal peptide occupies residues 1–19 (MKTAIFTVVLALAVFAVLS). A propeptide spanning residues 20–50 (FGWEANEKALSEEFTELIHEKEAASETEARE) is cleaved from the precursor. 3 cysteine pairs are disulfide-bonded: cysteine 51/cysteine 65, cysteine 58/cysteine 70, and cysteine 64/cysteine 81.

It belongs to the neurotoxin 10 (Hwtx-1) family. 13 (Hntx-13) subfamily. In terms of tissue distribution, expressed by the venom gland.

The protein resides in the secreted. Its function is as follows. Ion channel inhibitor. The sequence is that of U7-theraphotoxin-Hhn1a 1 from Cyriopagopus hainanus (Chinese bird spider).